The primary structure comprises 228 residues: Apoptosis regulator R1 (228 aa).

Residues 1 to 21 show a composition bias toward basic and acidic residues; it reads LNPKKKENNGVKNGDREKQHE. The segment at 1–29 is disordered; that stretch reads LNPKKKENNGVKNGDREKQHETGNTIFRG. The BH1 signature appears at 120 to 139; it reads SLFQGGVNWGRIVAFFVFGA. A BH2 motif is present at residues 171-186; it reads DWIQSNGGWNGFLTLY. Residues 207–227 form a helical membrane-spanning segment; it reads TVLTGAVALGALMTVGALFAS.

The protein belongs to the Bcl-2 family.

The protein localises to the membrane. Could be the homolog of mammalian Bcl-W. The protein is Apoptosis regulator R1 of Xenopus laevis (African clawed frog).